Reading from the N-terminus, the 553-residue chain is ATP synthase F(1) complex subunit alpha, mitochondrial (553 aa).

The transit peptide at M1 to L43 directs the protein to the mitochondrion. A Pyrrolidone carboxylic acid modification is found at Q44. Phosphoserine occurs at positions 53 and 65. S76 bears the Phosphoserine; alternate mark. S76 is a glycosylation site (O-linked (GlcNAc) serine; alternate). S106 is modified (phosphoserine). N6-acetyllysine occurs at positions 123, 126, and 132. T134 is subject to Phosphothreonine. Residue K161 is modified to N6-acetyllysine; alternate. K161 carries the post-translational modification N6-succinyllysine; alternate. S166 is subject to Phosphoserine. K167 carries the N6-acetyllysine; alternate modification. The residue at position 167 (K167) is an N6-succinyllysine; alternate. S184 is modified (phosphoserine). Position 204 is an omega-N-methylarginine (R204). Q215, G217, K218, T219, and S220 together coordinate ATP. T219 contributes to the Mg(2+) binding site. An N6-acetyllysine; alternate mark is found at K230 and K239. K230 and K239 each carry N6-succinyllysine; alternate. The residue at position 240 (K240) is an N6-acetyllysine. 2 positions are modified to N6-acetyllysine; alternate: K261 and K305. K261 and K305 each carry N6-succinyllysine; alternate. Position 312 (D312) interacts with Mg(2+). An N6-acetyllysine; alternate modification is found at K427. K427 is subject to N6-succinyllysine; alternate. Residue K434 is modified to N6-acetyllysine. ATP is bound by residues Q473 and Q475. An N6-acetyllysine; alternate mark is found at K498, K506, K531, and K539. 4 positions are modified to N6-succinyllysine; alternate: K498, K506, K531, and K539. Position 541 is an N6-acetyllysine (K541).

The protein belongs to the ATPase alpha/beta chains family. Homotrimer. Component of the ATP synthase complex composed at least of ATP5F1A/subunit alpha, ATP5F1B/subunit beta, ATP5MC1/subunit c (homooctomer), MT-ATP6/subunit a, MT-ATP8/subunit 8, ATP5ME/subunit e, ATP5MF/subunit f, ATP5MG/subunit g, ATP5MK/subunit k, ATP5MJ/subunit j, ATP5F1C/subunit gamma, ATP5F1D/subunit delta, ATP5F1E/subunit epsilon, ATP5PF/subunit F6, ATP5PB/subunit b, ATP5PD/subunit d, ATP5PO/subunit OSCP. ATP synthase complex consists of a soluble F(1) head domain (subunits alpha(3) and beta(3)) - the catalytic core - and a membrane F(0) domain - the membrane proton channel (subunits c, a, 8, e, f, g, k and j). These two domains are linked by a central stalk (subunits gamma, delta, and epsilon) rotating inside the F1 region and a stationary peripheral stalk (subunits F6, b, d, and OSCP). Interacts with ATPAF2. Interacts with HRG; the interaction occurs on the surface of T-cells and alters the cell morphology when associated with concanavalin (in vitro). Interacts with PLG (angiostatin peptide); the interaction inhibits most of the angiogenic properties of angiostatin. Interacts with BLOC1S1. Interacts with BCL2L1 isoform BCL-X(L); the interaction mediates the association of BCL2L1 isoform BCL-X(L) with the mitochondrial membrane F(1)F(0) ATP synthase and enhances neurons metabolic efficiency. Interacts with CLN5 and PPT1. Interacts with S100A1; this interaction increases F1-ATPase activity. Interacts with ABCB7; this interaction allows the regulation of cellular iron homeostasis and cellular reactive oxygen species (ROS) levels in cardiomyocytes. Acetylated on lysine residues. BLOC1S1 is required for acetylation. Heart muscle (at protein level). Heart and liver.

The protein localises to the mitochondrion inner membrane. It localises to the cell membrane. Its function is as follows. Subunit alpha, of the mitochondrial membrane ATP synthase complex (F(1)F(0) ATP synthase or Complex V) that produces ATP from ADP in the presence of a proton gradient across the membrane which is generated by electron transport complexes of the respiratory chain. ATP synthase complex consist of a soluble F(1) head domain - the catalytic core - and a membrane F(1) domain - the membrane proton channel. These two domains are linked by a central stalk rotating inside the F(1) region and a stationary peripheral stalk. During catalysis, ATP synthesis in the catalytic domain of F(1) is coupled via a rotary mechanism of the central stalk subunits to proton translocation. In vivo, can only synthesize ATP although its ATP hydrolase activity can be activated artificially in vitro. With the catalytic subunit beta (ATP5F1B), forms the catalytic core in the F(1) domain. Subunit alpha does not bear the catalytic high-affinity ATP-binding sites. This Bos taurus (Bovine) protein is ATP synthase F(1) complex subunit alpha, mitochondrial.